The following is a 145-amino-acid chain: LIM domain only protein 3 (145 aa).

LIM zinc-binding domains lie at 11 to 73 and 75 to 137; these read KGCA…LFGT and GNCA…GLMK.

The protein is LIM domain only protein 3 (Lmo3) of Rattus norvegicus (Rat).